Consider the following 108-residue polypeptide: UPF0060 membrane protein RSKD131_0092 (108 aa).

Helical transmembrane passes span 5–25, 32–52, 62–82, and 86–106; these read LAAY…VWAW, ALWL…LALT, AVYG…VEGV, and RWDM…LWAP.

This sequence belongs to the UPF0060 family.

The protein resides in the cell inner membrane. This chain is UPF0060 membrane protein RSKD131_0092, found in Cereibacter sphaeroides (strain KD131 / KCTC 12085) (Rhodobacter sphaeroides).